Consider the following 246-residue polypeptide: MPALRFLALLASLLATSRVGLATLADIVGGRRAQPQEFPFLASIQKQGRPFCAGALVHPRFVLTAASCFRGKNSGSASVVLGAYDLRQQEQSRQTFSIRSISQNGYDPRQNLNDVLLLQLDREARLTPSVALVPLPPQNATVEAGTNCQVAGWGTQRLRRLFSRFPRVLNVTVTSNPCLPRDMCIGVFSRRGRISQGDRGTPLVCNGLAQGVASFLRRRFRRSSGFFTRVALFRNWIDSVLNNPPA.

Positions 1 to 19 (MPALRFLALLASLLATSRV) are cleaved as a signal peptide. Positions 20–26 (GLATLAD) are excised as a propeptide. Positions 27 to 242 (IVGGRRAQPQ…FRNWIDSVLN (216 aa)) constitute a Peptidase S1 domain. A disulfide bond links cysteine 52 and cysteine 68. N-linked (GlcNAc...) asparagine glycans are attached at residues asparagine 139 and asparagine 170. 2 cysteine pairs are disulfide-bonded: cysteine 148–cysteine 205 and cysteine 178–cysteine 184. Positions 245 to 246 (PA) are excised as a propeptide.

Belongs to the peptidase S1 family. Elastase subfamily.

It localises to the cytoplasmic granule membrane. This is a neutrophil granule-derived antibacterial and monocyte- and fibroblast-specific chemotactic glycoprotein. Binds heparin. The sequence is that of Azurocidin from Sus scrofa (Pig).